We begin with the raw amino-acid sequence, 411 residues long: 2,3-bisphosphoglycerate-independent phosphoglycerate mutase (411 aa).

The protein belongs to the BPG-independent phosphoglycerate mutase family. A-PGAM subfamily. In terms of assembly, homotetramer. The cofactor is Mg(2+).

The enzyme catalyses (2R)-2-phosphoglycerate = (2R)-3-phosphoglycerate. It functions in the pathway carbohydrate degradation; glycolysis; pyruvate from D-glyceraldehyde 3-phosphate: step 3/5. Its activity is regulated as follows. Inhibited to approximately 20% by EDTA. Its function is as follows. Catalyzes the interconversion of 2-phosphoglycerate and 3-phosphoglycerate. The protein is 2,3-bisphosphoglycerate-independent phosphoglycerate mutase (apgM) of Pyrococcus furiosus (strain ATCC 43587 / DSM 3638 / JCM 8422 / Vc1).